The primary structure comprises 338 residues: Delta(9)-fatty-acid desaturase fat-7 (338 aa).

The next 4 helical transmembrane spans lie at 51–71, 76–96, 194–214, and 218–238; these read VALF…LVFH, TAVF…AGAH, YFPL…VYFW, and AFIA…HATW.

This sequence belongs to the fatty acid desaturase type 1 family. In terms of tissue distribution, expressed in the intestine in adult worms and in all four larval stages.

The protein localises to the membrane. The catalysed reaction is octadecanoyl-CoA + 2 Fe(II)-[cytochrome b5] + O2 + 2 H(+) = (9Z)-octadecenoyl-CoA + 2 Fe(III)-[cytochrome b5] + 2 H2O. It catalyses the reaction hexadecanoyl-CoA + 2 Fe(II)-[cytochrome b5] + O2 + 2 H(+) = (9Z)-hexadecenoyl-CoA + 2 Fe(III)-[cytochrome b5] + 2 H2O. The enzyme catalyses heptadecanoyl-CoA + 2 Fe(II)-[cytochrome b5] + O2 + 2 H(+) = (9Z)-heptadecenoyl-CoA + 2 Fe(III)-[cytochrome b5] + 2 H2O. It carries out the reaction (11E)-octadecenoyl-CoA + 2 Fe(II)-[cytochrome b5] + O2 + 2 H(+) = (9Z,11E)-octadecadienoyl-CoA + 2 Fe(III)-[cytochrome b5] + 2 H2O. It functions in the pathway lipid metabolism; monounsaturated fatty acid biosynthesis. It participates in lipid metabolism; fatty acid metabolism. Its function is as follows. Delta(9)-fatty acid desaturase that acts preferentially on stearoyl-CoA (octadecanoyl-CoA) producing the monounsaturated oleoyl-CoA ((9Z)-octadecenoyl-CoA), one of the most abundant monounsaturated fatty acid in Caenorhabditis elegans phospholipids and triacylglycerols. Also acts on palmitoyl-CoA (hexadecanoyl-CoA), heptadecanoyl-CoA and (11E)-octadecenoyl-CoA (trans-vaccenoyl-CoA), the monounsaturated fatty acids (MUFAs) produced are further used by several other desaturases and elongases as substrates to synthesize polyunsaturated fatty acids (PUFAs) endogenously (PUFAs are essential for membrane structure and many cellular and physiological processes). Unlike plants, Caenorhabditis elegans desaturases seem to use fatty acyl-CoAs as substrates. Partially inhibits expression of genes involved in beta-oxidation, such as ech-1 and acs-2, perhaps signaling via the actions of one of its fatty acid products. May form part of a negative feedback loop with the transcription factor nhr-49 to limit beta-oxidation, in which nhr-49 stimulates expression of fat-7 and acs-2, and in turn fat-7 indirectly inhibits acs-2 and other genes also involved in beta-oxidation. This Caenorhabditis elegans protein is Delta(9)-fatty-acid desaturase fat-7 (fat-7).